A 185-amino-acid polypeptide reads, in one-letter code: MKSLEEKTIAKEQIFSGKVIDLYVEDVELPNGKASKREIVKHPGAVAVLAVTDEGKIIMVKQFRKPLERTIVEIPAGKLEKGEEPEYTALRELEEETGYTAKKLTKITAFYTSPGFADEIVHVFLAEELSVLEEKRELDEDEFVEVMEVTLEDALKLVESREVYDAKTAYAIQYLQLKEALQAQK.

Residues 14 to 15 (IF), 37 to 38 (RE), and Arg64 each bind substrate. The region spanning 40–171 (VKHPGAVAVL…EVYDAKTAYA (132 aa)) is the Nudix hydrolase domain. Residues Ala76, Glu92, and Glu96 each coordinate Mg(2+). The short motif at 77-98 (GKLEKGEEPEYTALRELEEETG) is the Nudix box element. Residues 113–115 (SPG) and Glu119 each bind substrate. The Proton acceptor role is filled by Glu140. Glu142 is a Mg(2+) binding site.

Belongs to the Nudix hydrolase family. NudF subfamily. The cofactor is Mg(2+).

It carries out the reaction ADP-D-ribose + H2O = D-ribose 5-phosphate + AMP + 2 H(+). In terms of biological role, acts on ADP-mannose and ADP-glucose as well as ADP-ribose. Prevents glycogen biosynthesis. The reaction catalyzed by this enzyme is a limiting step of the gluconeogenic process. The sequence is that of ADP-ribose pyrophosphatase (nudF) from Bacillus subtilis (strain 168).